The following is a 100-amino-acid chain: Small ribosomal subunit protein uS14c (100 aa).

The protein belongs to the universal ribosomal protein uS14 family. In terms of assembly, part of the 30S ribosomal subunit.

Its subcellular location is the plastid. It localises to the chloroplast. In terms of biological role, binds 16S rRNA, required for the assembly of 30S particles. The polypeptide is Small ribosomal subunit protein uS14c (Ceratophyllum demersum (Rigid hornwort)).